A 118-amino-acid polypeptide reads, in one-letter code: Large ribosomal subunit protein bL20 (118 aa).

It belongs to the bacterial ribosomal protein bL20 family.

In terms of biological role, binds directly to 23S ribosomal RNA and is necessary for the in vitro assembly process of the 50S ribosomal subunit. It is not involved in the protein synthesizing functions of that subunit. This is Large ribosomal subunit protein bL20 from Trichormus variabilis (strain ATCC 29413 / PCC 7937) (Anabaena variabilis).